The chain runs to 461 residues: UDP-N-acetylmuramoylalanine--D-glutamate ligase (461 aa).

Position 123–129 (123–129 (GTNGKTT)) interacts with ATP.

The protein belongs to the MurCDEF family.

Its subcellular location is the cytoplasm. It carries out the reaction UDP-N-acetyl-alpha-D-muramoyl-L-alanine + D-glutamate + ATP = UDP-N-acetyl-alpha-D-muramoyl-L-alanyl-D-glutamate + ADP + phosphate + H(+). Its pathway is cell wall biogenesis; peptidoglycan biosynthesis. Functionally, cell wall formation. Catalyzes the addition of glutamate to the nucleotide precursor UDP-N-acetylmuramoyl-L-alanine (UMA). This chain is UDP-N-acetylmuramoylalanine--D-glutamate ligase, found in Natranaerobius thermophilus (strain ATCC BAA-1301 / DSM 18059 / JW/NM-WN-LF).